We begin with the raw amino-acid sequence, 948 residues long: UvrABC system protein A (948 aa).

Position 42 to 49 (42 to 49 (GLSGSGKS)) interacts with ATP. A C4-type zinc finger spans residues 262–289 (CPVCSYSLPELEPRLFSFNNPMGSCPTC). 2 ABC transporter domains span residues 319-596 (WDKR…ENSV) and 616-945 (VNPG…KYLK). An ATP-binding site is contributed by 649-656 (GVSGSGKS). Residues 748–774 (CEACQGDGVIKVEMHFLPDVYVPCEVC) form a C4-type zinc finger.

This sequence belongs to the ABC transporter superfamily. UvrA family. In terms of assembly, forms a heterotetramer with UvrB during the search for lesions.

The protein localises to the cytoplasm. In terms of biological role, the UvrABC repair system catalyzes the recognition and processing of DNA lesions. UvrA is an ATPase and a DNA-binding protein. A damage recognition complex composed of 2 UvrA and 2 UvrB subunits scans DNA for abnormalities. When the presence of a lesion has been verified by UvrB, the UvrA molecules dissociate. The protein is UvrABC system protein A of Neisseria meningitidis serogroup A / serotype 4A (strain DSM 15465 / Z2491).